The following is a 533-amino-acid chain: Glucose-6-phosphate isomerase (533 aa).

Catalysis depends on E322, which acts as the Proton donor. Residues H351 and K455 contribute to the active site.

The protein belongs to the GPI family.

The protein resides in the cytoplasm. It catalyses the reaction alpha-D-glucose 6-phosphate = beta-D-fructose 6-phosphate. It participates in carbohydrate biosynthesis; gluconeogenesis. It functions in the pathway carbohydrate degradation; glycolysis; D-glyceraldehyde 3-phosphate and glycerone phosphate from D-glucose: step 2/4. Its function is as follows. Catalyzes the reversible isomerization of glucose-6-phosphate to fructose-6-phosphate. This is Glucose-6-phosphate isomerase from Desulfitobacterium hafniense (strain Y51).